The primary structure comprises 304 residues: Syntaxin-132 (304 aa).

Met-1 carries the post-translational modification N-acetylmethionine. Positions 1 to 30 (MNDLLKGSFELPRGQSSREGDVELGEQQGG) are disordered. At 1 to 275 (MNDLLKGSFE…AKSLQKNSRK (275 aa)) the chain is on the cytoplasmic side. Coiled-coil stretches lie at residues 34–67 (LEDFFKKVQVIDKQYDKLDKLLKKLQASHEESKS) and 129–162 (TLSLKKKLKDKMAEFQVLRENIQQEYRDVVDRRV). The 63-residue stretch at 204–266 (LAEIQERHDA…QSGNTALQRA (63 aa)) folds into the t-SNARE coiled-coil homology domain. The helical; Anchor for type IV membrane protein transmembrane segment at 276–296 (WMCIAIIILLIVVAVIVVGVL) threads the bilayer. Residues 297–304 (KPWKNKSA) lie on the Vesicular side of the membrane.

Belongs to the syntaxin family. In terms of assembly, part of the t-SNARE complex. Widely expressed in all tissues throughout plant development.

It localises to the cell membrane. Its function is as follows. Vesicle trafficking protein that functions in the secretory pathway. Acts in coordination with SYP123 to mediate tip-focused membrane trafficking for root hair tip growth. Functions in root hair elongation by forming SNARE complexes with VAMP721,VAMP722 or VAMP724. Involved in cytokinesis. Acts as a cell plate-specific syntaxin, required for the fusion of vesicles at the plane of cell division. Required for secretory trafficking to the plasma membrane during interphase. Involved in the regulation of density of the H(+) ATPase proteins at the plasma membrane of root and shoot in epidermal cells. Modulation of SYP132 expression by auxin affects clathrin-sensitive H(+) ATPase traffic from the plasma membrane, and influences apoplastic acidification and plant growth. The chain is Syntaxin-132 from Arabidopsis thaliana (Mouse-ear cress).